Here is a 201-residue protein sequence, read N- to C-terminus: MELVLKDAQSALTVSETTFGRDFNEALVHQVVVAYAAGARQGTRAQKTRAEVTGSGKKPWRQKGTGRARSGSIKSPIWRSGGVTFAAKPQDHSQKVNKKMYRGALKSILSELVRQDRLIVVEKFSVEAPKTKLLAQKLKEMALEDVLIITGELDENLFLAARNLYKVDVRDAAAIDPVSLIAFDKVVMTADAVKQVEEMLA.

The disordered stretch occupies residues 44–71 (RAQKTRAEVTGSGKKPWRQKGTGRARSG).

This sequence belongs to the universal ribosomal protein uL4 family. In terms of assembly, part of the 50S ribosomal subunit.

Its function is as follows. One of the primary rRNA binding proteins, this protein initially binds near the 5'-end of the 23S rRNA. It is important during the early stages of 50S assembly. It makes multiple contacts with different domains of the 23S rRNA in the assembled 50S subunit and ribosome. In terms of biological role, forms part of the polypeptide exit tunnel. The sequence is that of Large ribosomal subunit protein uL4 from Pectobacterium carotovorum subsp. carotovorum (strain PC1).